The primary structure comprises 319 residues: MTILEELNDSSIPQRLDNHIFFGSVHSLTHTDFLVENNIRFFINVDLSTELISHIYHEVRSKFAHEIVIVNIDNDSQIPIESDLVRSFHWHNTSLLQQLIHHLDFLSGINNHGEPLTPPPESHYRNAYVQFDHPSDSVSILDKLLYGNKSEYSRTNIFQVTNEAKFQVFNDLITIFKYSIAQGGNTNSNILVLSENGSTDENLISLLMSTVLKENPTFNVYQALQFVKSIAVIPDTVRDEKILWVTGFINYQELIKKNEMYWGLGSQKGRKLTSFASPISKVERKQRRRDDQNIMRSKLPQQRQNPFCSTERPKRARCD.

The interval 281-319 (KVERKQRRRDDQNIMRSKLPQQRQNPFCSTERPKRARCD) is disordered. The segment covering 299–308 (LPQQRQNPFC) has biased composition (polar residues).

The protein resides in the cytoplasm. It localises to the nucleus. This is an uncharacterized protein from Saccharomyces cerevisiae (strain ATCC 204508 / S288c) (Baker's yeast).